A 248-amino-acid polypeptide reads, in one-letter code: 4-hydroxy-tetrahydrodipicolinate reductase (248 aa).

Residues 74–76 (GTT) and 99–102 (SANF) contribute to the NAD(+) site. Catalysis depends on histidine 134, which acts as the Proton donor/acceptor. Position 135 (histidine 135) interacts with (S)-2,3,4,5-tetrahydrodipicolinate. Lysine 138 (proton donor) is an active-site residue. 144–145 (GT) serves as a coordination point for (S)-2,3,4,5-tetrahydrodipicolinate.

It belongs to the DapB family.

It localises to the cytoplasm. It catalyses the reaction (S)-2,3,4,5-tetrahydrodipicolinate + NAD(+) + H2O = (2S,4S)-4-hydroxy-2,3,4,5-tetrahydrodipicolinate + NADH + H(+). The catalysed reaction is (S)-2,3,4,5-tetrahydrodipicolinate + NADP(+) + H2O = (2S,4S)-4-hydroxy-2,3,4,5-tetrahydrodipicolinate + NADPH + H(+). It functions in the pathway amino-acid biosynthesis; L-lysine biosynthesis via DAP pathway; (S)-tetrahydrodipicolinate from L-aspartate: step 4/4. Functionally, catalyzes the conversion of 4-hydroxy-tetrahydrodipicolinate (HTPA) to tetrahydrodipicolinate. This Chlorobium phaeobacteroides (strain DSM 266 / SMG 266 / 2430) protein is 4-hydroxy-tetrahydrodipicolinate reductase.